A 494-amino-acid polypeptide reads, in one-letter code: Aspartyl/glutamyl-tRNA(Asn/Gln) amidotransferase subunit B (494 aa).

It belongs to the GatB/GatE family. GatB subfamily. Heterotrimer of A, B and C subunits.

It carries out the reaction L-glutamyl-tRNA(Gln) + L-glutamine + ATP + H2O = L-glutaminyl-tRNA(Gln) + L-glutamate + ADP + phosphate + H(+). It catalyses the reaction L-aspartyl-tRNA(Asn) + L-glutamine + ATP + H2O = L-asparaginyl-tRNA(Asn) + L-glutamate + ADP + phosphate + 2 H(+). Its function is as follows. Allows the formation of correctly charged Asn-tRNA(Asn) or Gln-tRNA(Gln) through the transamidation of misacylated Asp-tRNA(Asn) or Glu-tRNA(Gln) in organisms which lack either or both of asparaginyl-tRNA or glutaminyl-tRNA synthetases. The reaction takes place in the presence of glutamine and ATP through an activated phospho-Asp-tRNA(Asn) or phospho-Glu-tRNA(Gln). The chain is Aspartyl/glutamyl-tRNA(Asn/Gln) amidotransferase subunit B from Synechococcus sp. (strain CC9605).